Here is a 730-residue protein sequence, read N- to C-terminus: Trimethylamine dehydrogenase (730 aa).

FMN-binding residues include proline 29, cysteine 31, tyrosine 61, and glutamate 104. Residue cysteine 31 is modified to S-6-FMN cysteine. Residue 170 to 173 participates in substrate binding; sequence YGAH. Tyrosine 175 acts as the Proton donor in catalysis. FMN-binding residues include arginine 223, aspartate 268, arginine 300, alanine 322, and arginine 323. 4 residues coordinate [4Fe-4S] cluster: cysteine 346, cysteine 349, cysteine 352, and cysteine 365. Serine 401, aspartate 420, threonine 421, histidine 428, methionine 471, and aspartate 675 together coordinate ADP.

The protein in the N-terminal section; belongs to the NADH:flavin oxidoreductase/NADH oxidase family. As to quaternary structure, homodimer. Forms a ternary complex with the heterodimeric electron transfer flavoprotein. It depends on FMN as a cofactor. Requires [4Fe-4S] cluster as cofactor.

The catalysed reaction is trimethylamine + oxidized [electron-transfer flavoprotein] + H2O + H(+) = dimethylamine + reduced [electron-transfer flavoprotein] + formaldehyde. The sequence is that of Trimethylamine dehydrogenase from Methylophilus methylotrophus (Bacterium W3A1).